We begin with the raw amino-acid sequence, 635 residues long: Probable monoacyl phosphatidylinositol tetramannoside-binding protein LpqW (635 aa).

Positions 1-26 are cleaved as a signal peptide; it reads MGVPSPVRRVCVTVGALVALACMVLA. Disordered stretches follow at residues 32–52, 389–412, and 511–551; these read PPPA…PRRP, NTSV…GPPE, and NAPT…LVKA. Composition is skewed to low complexity over residues 390–411 and 511–531; these read TSVS…TGPP and NAPT…APDT.

This sequence belongs to the bacterial solute-binding protein 5 family.

The protein operates within phospholipid metabolism; phosphatidylinositol metabolism. In terms of biological role, may directly or indirectly regulate the accessibility of the key branch point intermediate, monoacyl phosphatidylinositol tetramannoside (AcPIM4), to the elongating alpha-1,6 mannosyltransferases which could regulate the lipoarabinomannans (LAMs) biosynthesis. The chain is Probable monoacyl phosphatidylinositol tetramannoside-binding protein LpqW (lpqW) from Mycobacterium tuberculosis (strain CDC 1551 / Oshkosh).